A 559-amino-acid chain; its full sequence is Hepatocyte nuclear factor 1-beta (559 aa).

A dimerization region spans residues 1–31 (MVSKLTSLQQELLSALLSSGVTKEVLVQALE). One can recognise an HNF-p1 domain in the interval 1 to 32 (MVSKLTSLQQELLSALLSSGVTKEVLVQALEE). Phosphoserine is present on residues S49, S52, S75, and S80. The POU-specific atypical domain maps to 93–188 (KELQALNTEE…ILRQFNQTVQ (96 aa)). Residues 231-312 (MRRNRFKWGP…RRKEEEAFRQ (82 aa)) constitute a DNA-binding region (homeobox; HNF1-type). The span at 328–341 (NTLLSHSSPHHQPS) shows a compositional bias: low complexity. The disordered stretch occupies residues 328–371 (NTLLSHSSPHHQPSTSPPNKLPGVRYNQQGNNEVTSSSTISHHG). Polar residues predominate over residues 353-371 (YNQQGNNEVTSSSTISHHG).

Belongs to the HNF1 homeobox family. As to quaternary structure, binds DNA as a dimer. Can form homodimer or heterodimer with HNF1-alpha. Interacts (via HNF-p1 domain) with PCBD1; the interaction increases its transactivation activity.

The protein localises to the nucleus. Functionally, transcription factor that binds to the inverted palindrome 5'-GTTAATNATTAAC-3'. Binds to the FPC element in the cAMP regulatory unit of the PLAU gene. Transcriptional activity is increased by coactivator PCBD1. The polypeptide is Hepatocyte nuclear factor 1-beta (HNF1B) (Sus scrofa (Pig)).